Consider the following 303-residue polypeptide: Putative deoxyribose-phosphate aldolase (303 aa).

Asp-157 serves as the catalytic Proton donor/acceptor. The active-site Schiff-base intermediate with acetaldehyde is the Lys-220. Lys-256 (proton donor/acceptor) is an active-site residue.

This sequence belongs to the DeoC/FbaB aldolase family. DeoC type 2 subfamily.

It catalyses the reaction 2-deoxy-D-ribose 5-phosphate = D-glyceraldehyde 3-phosphate + acetaldehyde. It functions in the pathway carbohydrate degradation; 2-deoxy-D-ribose 1-phosphate degradation; D-glyceraldehyde 3-phosphate and acetaldehyde from 2-deoxy-alpha-D-ribose 1-phosphate: step 2/2. Functionally, catalyzes a reversible aldol reaction between acetaldehyde and D-glyceraldehyde 3-phosphate to generate 2-deoxy-D-ribose 5-phosphate. The polypeptide is Putative deoxyribose-phosphate aldolase (Caenorhabditis elegans).